Here is a 199-residue protein sequence, read N- to C-terminus: FMN-dependent NADH:quinone oxidoreductase 2 (199 aa).

FMN contacts are provided by residues S10, 16-18, and 96-99; these read SVS and MYNF.

Belongs to the azoreductase type 1 family. In terms of assembly, homodimer. FMN serves as cofactor.

The enzyme catalyses 2 a quinone + NADH + H(+) = 2 a 1,4-benzosemiquinone + NAD(+). The catalysed reaction is N,N-dimethyl-1,4-phenylenediamine + anthranilate + 2 NAD(+) = 2-(4-dimethylaminophenyl)diazenylbenzoate + 2 NADH + 2 H(+). Its function is as follows. Quinone reductase that provides resistance to thiol-specific stress caused by electrophilic quinones. In terms of biological role, also exhibits azoreductase activity. Catalyzes the reductive cleavage of the azo bond in aromatic azo compounds to the corresponding amines. The chain is FMN-dependent NADH:quinone oxidoreductase 2 from Pseudomonas fluorescens (strain Pf0-1).